The following is a 96-amino-acid chain: UPF0213 protein BCE33L0031 (96 aa).

Residues 4 to 79 (NKHCFYVVEC…KQLNRKQKEE (76 aa)) form the GIY-YIG domain.

The protein belongs to the UPF0213 family.

The protein is UPF0213 protein BCE33L0031 of Bacillus cereus (strain ZK / E33L).